The primary structure comprises 119 residues: Large ribosomal subunit protein bL20 (119 aa).

The protein belongs to the bacterial ribosomal protein bL20 family.

Binds directly to 23S ribosomal RNA and is necessary for the in vitro assembly process of the 50S ribosomal subunit. It is not involved in the protein synthesizing functions of that subunit. The sequence is that of Large ribosomal subunit protein bL20 from Clostridium kluyveri (strain NBRC 12016).